A 331-amino-acid chain; its full sequence is Ornithine carbamoyltransferase (331 aa).

Residues 55–58 (STRT), Gln82, Arg106, and 133–136 (HPTQ) contribute to the carbamoyl phosphate site. L-ornithine contacts are provided by residues Asn166, Asp230, and 234–235 (SM). Carbamoyl phosphate is bound by residues 272-273 (CL) and Arg317.

This sequence belongs to the aspartate/ornithine carbamoyltransferase superfamily. OTCase family.

It is found in the cytoplasm. It catalyses the reaction carbamoyl phosphate + L-ornithine = L-citrulline + phosphate + H(+). It functions in the pathway amino-acid biosynthesis; L-arginine biosynthesis; L-arginine from L-ornithine and carbamoyl phosphate: step 1/3. Its function is as follows. Reversibly catalyzes the transfer of the carbamoyl group from carbamoyl phosphate (CP) to the N(epsilon) atom of ornithine (ORN) to produce L-citrulline. The chain is Ornithine carbamoyltransferase (argF) from Neisseria meningitidis serogroup B (strain ATCC BAA-335 / MC58).